The primary structure comprises 673 residues: MACLLEAPLRISVLSEVTATSRHYVDRLFDPDPQNVLQGVIDMKNAVIGNNKQKANLIVLGAVPRLLYLLQQSSSTLELRTECAVVLGSLSMGTENNIKSLVDCHIIPALLQGLLCSDLIFIEACLRCLRTVFISPVTPVQLLYTDPTVIPHLMSLLSRSQHTQEYITQIFAHCCKTPEHQTVLFNHGAIQNIAPLLISPSYKVRMQALKCFSVLAYENAQVSMTLVNVLVDGEQLSQVFVRMMQRDKPIEMQLTAAKCLTYMCRAGAIRTEDNCIVLKTLPCLVRMCSKERLLEERVEGAETLAYLMEPDIELQRIASVTDHLVSMLADYFKYPSSVSAITDIKRLDHDLKHAHELRQAAFKLYASLGSNDEDIRKKITETENMMDRIVSGLSESSIKVRLAAVRCLHSLSRSVQQLRTSFHDHAVWKPLMKLLQNAPDEVLVMASSTLCNLLLEFSPSKEPILESGVIELLCSLTQSDSSALRVNGIWALMNMAFQADQKVKVEIVRALGTEQLFRLLSDPDTNVLMKTLGLLRNLLSTRPHIDQIMSSHGKQIMQAVTLILEGEHSIEVKEQTLCILANIADGNTAKELIMTDDDMLQKIKYYMGHSNVKLQLAATFCISNLIWNEEDGSQERQDKLREMGFVDILHKLTQASDPDLCDRAKTAMQQYLA.

14 ARM repeats span residues 51-92, 95-134, 138-176, 178-217, 225-265, 269-309, 313-352, 374-413, 416-455, 458-497, 501-540, 543-585, 588-627, and 634-673; these read NKQK…SLSM, ENNI…TVFI, TPVQ…HCCK, PEHQ…VLAY, TLVN…YMCR, IRTE…YLME, ELQR…HDLK, DIRK…SLSR, QQLR…NLLL, SPSK…NMAF, QKVK…NLLS, PHID…NIAD, TAKE…NLIW, and QERQ…QYLA.

In terms of assembly, identified in the CTLH complex that contains at least MAEA, RMND5A (or alternatively its paralog RMND5B), GID8, WDR26, and RANBP9 and/or RANBP10; ARMC8 has an ancillary role in the complex.

It localises to the nucleus. The protein resides in the cytoplasm. Functionally, component of the CTLH E3 ubiquitin-protein ligase complex that mediates ubiquitination and subsequent proteasomal degradation of target proteins. The chain is Armadillo repeat-containing protein 8 (armc8) from Danio rerio (Zebrafish).